We begin with the raw amino-acid sequence, 557 residues long: Dihydroxy-acid dehydratase (557 aa).

Residue Cys-50 coordinates [2Fe-2S] cluster. Asp-82 contacts Mg(2+). Cys-123 lines the [2Fe-2S] cluster pocket. Mg(2+) contacts are provided by Asp-124 and Lys-125. The residue at position 125 (Lys-125) is an N6-carboxylysine. Cys-195 is a binding site for [2Fe-2S] cluster. Mg(2+) is bound at residue Glu-447. The active-site Proton acceptor is Ser-473.

This sequence belongs to the IlvD/Edd family. Homodimer. It depends on [2Fe-2S] cluster as a cofactor. Requires Mg(2+) as cofactor.

The enzyme catalyses (2R)-2,3-dihydroxy-3-methylbutanoate = 3-methyl-2-oxobutanoate + H2O. The catalysed reaction is (2R,3R)-2,3-dihydroxy-3-methylpentanoate = (S)-3-methyl-2-oxopentanoate + H2O. Its pathway is amino-acid biosynthesis; L-isoleucine biosynthesis; L-isoleucine from 2-oxobutanoate: step 3/4. It participates in amino-acid biosynthesis; L-valine biosynthesis; L-valine from pyruvate: step 3/4. Functionally, functions in the biosynthesis of branched-chain amino acids. Catalyzes the dehydration of (2R,3R)-2,3-dihydroxy-3-methylpentanoate (2,3-dihydroxy-3-methylvalerate) into 2-oxo-3-methylpentanoate (2-oxo-3-methylvalerate) and of (2R)-2,3-dihydroxy-3-methylbutanoate (2,3-dihydroxyisovalerate) into 2-oxo-3-methylbutanoate (2-oxoisovalerate), the penultimate precursor to L-isoleucine and L-valine, respectively. The polypeptide is Dihydroxy-acid dehydratase (Burkholderia pseudomallei (strain 1710b)).